A 1285-amino-acid chain; its full sequence is DNA polymerase II large subunit (1285 aa).

Residues 565–586 form a disordered region; it reads TRIGGRMGRPGKSKPREMRPPP.

Belongs to the archaeal DNA polymerase II family. Heterodimer of a large subunit and a small subunit. In terms of processing, this protein undergoes a protein self splicing that involves a post-translational excision of the intervening region (intein) followed by peptide ligation.

It catalyses the reaction DNA(n) + a 2'-deoxyribonucleoside 5'-triphosphate = DNA(n+1) + diphosphate. The catalysed reaction is Exonucleolytic cleavage in the 3'- to 5'-direction to yield nucleoside 5'-phosphates.. Possesses two activities: a DNA synthesis (polymerase) and an exonucleolytic activity that degrades single-stranded DNA in the 3'- to 5'-direction. Has a template-primer preference which is characteristic of a replicative DNA polymerase. The sequence is that of DNA polymerase II large subunit from Methanoculleus marisnigri (strain ATCC 35101 / DSM 1498 / JR1).